The primary structure comprises 555 residues: Transmembrane protein 87B (555 aa).

The first 42 residues, 1 to 42, serve as a signal peptide directing secretion; sequence MAAACRSEAGLLPSLLCRRPAGAQLLRVALCLLCWVPAAVDA. Residues 43–216 lie on the Lumenal side of the membrane; the sequence is VPELGLWTRT…HGYISASDWP (174 aa). N-linked (GlcNAc...) asparagine glycans are attached at residues N68, N160, and N198. A helical transmembrane segment spans residues 217–237; that stretch reads LMIFYMVMCIVYILYGVLWLL. Residues 238–248 lie on the Cytoplasmic side of the membrane; that stretch reads WSACYWKDILR. Residues 249-269 traverse the membrane as a helical segment; it reads IQFWIAAVIFLGMLEKAVFYS. Residues 270 to 300 are Lumenal-facing; it reads EYQNINSTGLSTQGLLIFAELISAVKRTLAR. The N-linked (GlcNAc...) asparagine glycan is linked to N275. A helical transmembrane segment spans residues 301 to 321; sequence LLVIIVSLGYGIVKPRLGTVM. Residues 322 to 323 lie on the Cytoplasmic side of the membrane; sequence HR. Residues 324–344 traverse the membrane as a helical segment; it reads VIGLGLLYLIFAAIEGVMRVI. Topologically, residues 345 to 351 are lumenal; the sequence is GGSKHLA. The chain crosses the membrane as a helical span at residues 352-372; the sequence is VVLTDIVLAVIDSIFVWFIFI. The Cytoplasmic segment spans residues 373 to 394; sequence SLAQTMKTLRLRKNTVKFSLYR. Residues 395–415 traverse the membrane as a helical segment; that stretch reads HFTNTLIFAVLASIVFMVWTT. Topologically, residues 416–429 are lumenal; sequence KTFRIAKCQSDWME. The chain crosses the membrane as a helical span at residues 430–450; it reads LWVDDAFWSFLFSVILIVIMF. The Cytoplasmic segment spans residues 451 to 555; the sequence is LWRPSANNQR…EKMFSSEKIM (105 aa). Phosphoserine occurs at positions 470, 497, and 534.

The protein belongs to the LU7TM family. TMEM87 subfamily.

It is found in the golgi apparatus membrane. In terms of biological role, may be involved in retrograde transport from endosomes to the trans-Golgi network (TGN). This is Transmembrane protein 87B from Mus musculus (Mouse).